The primary structure comprises 179 residues: Lebocin-4 (179 aa).

A signal peptide spans 1-16; that stretch reads MYKFLVFSSVLVLFFA. Residues 17–120 constitute a propeptide that is removed on maturation; it reads QASCQRFIQP…RPIESHRNTR (104 aa). An O-linked (GalNAc...) threonine glycan is attached at threonine 135. Positions 153–179 are excised as a propeptide; the sequence is RRHASDDQEELRHHNEHFLIPRDILQD.

Belongs to the lebocin family. Post-translationally, O-glycosylation is important for the antibacterial activity of lebocin. Hemolymph. Produced in fat body.

The protein resides in the secreted. Functionally, antibacterial peptide. The protein is Lebocin-4 (LEB4) of Bombyx mori (Silk moth).